Reading from the N-terminus, the 345-residue chain is L-erythro-3,5-diaminohexanoate dehydrogenase (345 aa).

It belongs to the KDD family. As to quaternary structure, homodimer.

The catalysed reaction is (3S,5S)-3,5-diaminohexanoate + NAD(+) + H2O = (5S)-5-amino-3-oxohexanoate + NH4(+) + NADH + H(+). The protein operates within amino-acid degradation; L-lysine degradation via acetate pathway. Its function is as follows. Involved in the anaerobic fermentation of lysine. Catalyzes the oxidative deamination of L-erythro-3,5-diaminohexanoate (3,5-DAH) to 3-keto-5-aminohexanoate (KAH). It can use NAD or NADP. This Fusobacterium nucleatum subsp. nucleatum (strain ATCC 25586 / DSM 15643 / BCRC 10681 / CIP 101130 / JCM 8532 / KCTC 2640 / LMG 13131 / VPI 4355) protein is L-erythro-3,5-diaminohexanoate dehydrogenase.